The primary structure comprises 307 residues: tRNA dimethylallyltransferase 1 (307 aa).

10 to 17 (GPTASGKT) contributes to the ATP binding site. Position 12-17 (12-17 (TASGKT)) interacts with substrate. The interaction with substrate tRNA stretch occupies residues 35–38 (DSRQ).

This sequence belongs to the IPP transferase family. Monomer. Requires Mg(2+) as cofactor.

The catalysed reaction is adenosine(37) in tRNA + dimethylallyl diphosphate = N(6)-dimethylallyladenosine(37) in tRNA + diphosphate. Its function is as follows. Catalyzes the transfer of a dimethylallyl group onto the adenine at position 37 in tRNAs that read codons beginning with uridine, leading to the formation of N6-(dimethylallyl)adenosine (i(6)A). This is tRNA dimethylallyltransferase 1 from Geotalea daltonii (strain DSM 22248 / JCM 15807 / FRC-32) (Geobacter daltonii).